A 419-amino-acid chain; its full sequence is Enolase (419 aa).

Q161 is a binding site for (2R)-2-phosphoglycerate. E205 (proton donor) is an active-site residue. Mg(2+) contacts are provided by D240, E283, and D309. K334, R363, S364, and K385 together coordinate (2R)-2-phosphoglycerate. Residue K334 is the Proton acceptor of the active site.

The protein belongs to the enolase family. The cofactor is Mg(2+).

It is found in the cytoplasm. Its subcellular location is the secreted. The protein localises to the cell surface. The catalysed reaction is (2R)-2-phosphoglycerate = phosphoenolpyruvate + H2O. It functions in the pathway carbohydrate degradation; glycolysis; pyruvate from D-glyceraldehyde 3-phosphate: step 4/5. Its function is as follows. Catalyzes the reversible conversion of 2-phosphoglycerate (2-PG) into phosphoenolpyruvate (PEP). It is essential for the degradation of carbohydrates via glycolysis. The protein is Enolase of Saccharolobus islandicus (strain M.16.27) (Sulfolobus islandicus).